A 518-amino-acid polypeptide reads, in one-letter code: 3-octaprenyl-4-hydroxybenzoate carboxy-lyase (518 aa).

Asn177 serves as a coordination point for Mn(2+). Prenylated FMN is bound by residues 180–182 (IYR), 194–196 (RWL), and 199–200 (RG). Glu243 contributes to the Mn(2+) binding site. Asp318 acts as the Proton donor in catalysis.

It belongs to the UbiD family. As to quaternary structure, homohexamer. The cofactor is prenylated FMN. It depends on Mn(2+) as a cofactor.

It is found in the cell membrane. It carries out the reaction a 4-hydroxy-3-(all-trans-polyprenyl)benzoate + H(+) = a 2-(all-trans-polyprenyl)phenol + CO2. Its pathway is cofactor biosynthesis; ubiquinone biosynthesis. Functionally, catalyzes the decarboxylation of 3-octaprenyl-4-hydroxy benzoate to 2-octaprenylphenol, an intermediate step in ubiquinone biosynthesis. The chain is 3-octaprenyl-4-hydroxybenzoate carboxy-lyase from Burkholderia lata (strain ATCC 17760 / DSM 23089 / LMG 22485 / NCIMB 9086 / R18194 / 383).